The chain runs to 141 residues: Large ribosomal subunit protein uL16 (141 aa).

The interval 1–21 (MLMPKRVKYRKQQRGHNRGMA) is disordered.

This sequence belongs to the universal ribosomal protein uL16 family. As to quaternary structure, part of the 50S ribosomal subunit.

Its function is as follows. Binds 23S rRNA and is also seen to make contacts with the A and possibly P site tRNAs. The polypeptide is Large ribosomal subunit protein uL16 (Roseiflexus sp. (strain RS-1)).